The sequence spans 2151 residues: Polycystin-1-like protein 3 (2151 aa).

The N-terminal stretch at 1–20 (MLLQRRSWLWLYIRIGVILG) is a signal peptide. The Extracellular segment spans residues 25-1073 (RKPSIREQHG…IKLLLHVTNN (1049 aa)). Positions 34–142 (GGNSCYQLNR…CIEKHHFICQ (109 aa)) constitute a C-type lectin domain. 2 disulfides stabilise this stretch: Cys-55/Cys-141 and Cys-116/Cys-133. A glycan (N-linked (GlcNAc...) asparagine) is linked at Asn-89. Over residues 222–245 (SLTGRPQVTSDTLASSSPPQGTSD) the composition is skewed to polar residues. The interval 222-609 (SLTGRPQVTS…SSSPPWPVIT (388 aa)) is disordered. Over residues 246–348 (TPASSSPPQV…ASSSPPQGTS (103 aa)) the composition is skewed to low complexity. 2 stretches are compositionally biased toward polar residues: residues 349–363 (DTPASSSPPQGTLDT) and 371–600 (QGTS…TPAS). N-linked (GlcNAc...) asparagine glycans are attached at residues Asn-566, Asn-579, Asn-592, Asn-913, and Asn-951. Residues 899–1061 (TSLNTSTDHF…FIVPRTVDVE (163 aa)) form the GAIN-B domain. Cystine bridges form between Cys-1011–Cys-1039 and Cys-1026–Cys-1041. The GPS stretch occupies residues 1011–1061 (CYFWDRYNRTWKSDGCQVGPKSTILKTQCLCDHLTFFSSDFFIVPRTVDVE). A stachel region spans residues 1045–1061 (TFFSSDFFIVPRTVDVE). The helical transmembrane segment at 1074–1094 (PVGVSLLSSLLGFYILLAMWA) threads the bilayer. The Cytoplasmic segment spans residues 1095-1283 (SRKDREDMQK…NQFTRVQRLS (189 aa)). Residues 1119–1236 (SHYLIQVYTG…GNCERDRVFT (118 aa)) form the PLAT domain. The chain crosses the membrane as a helical span at residues 1284–1304 (CCMALLLCDMVINIMFWKMGG). At 1305–1320 (TTAKRGTEQLGPLAVT) the chain is on the extracellular side. Residues 1321-1341 (LSELLVSIQTSIILFPIHLIF) traverse the membrane as a helical segment. Residues 1342–1533 (GRLFQLIHPP…FCLFRWLKCS (192 aa)) are Cytoplasmic-facing. A helical membrane pass occupies residues 1534-1554 (CWLLLGVISLASAFFITLYSL). The Extracellular portion of the chain corresponds to 1555 to 1575 (ELDKDQATSWVISMMLSVLQD). The chain crosses the membrane as a helical span at residues 1576–1596 (IFISQPIKVIFLTLLFSLMAN). The Cytoplasmic portion of the chain corresponds to 1597–1665 (HMPWLNKDKE…KLTGGTLVQI (69 aa)). The chain crosses the membrane as a helical span at residues 1666–1676 (LFLTLLMTTVY). The Extracellular portion of the chain corresponds to 1677–1892 (SAKDSSRFFL…SLTSLQSSER (216 aa)). 2 N-linked (GlcNAc) asparagine glycosylation sites follow: Asn-1712 and Asn-1822. The helical transmembrane segment at 1893 to 1921 (GFAWIVSQVVYYLLVCYYAFIQGCRLKRQ) threads the bilayer. Residues 1922-1930 (RLAFFTRKR) are Cytoplasmic-facing. Residues 1931–1949 (NLLDTSIVLISFSILGLSM) traverse the membrane as a helical segment. The Extracellular segment spans residues 1950 to 1980 (QSLSLLHKKMQQYHCDRDRFISFYEALRVNS). The helical transmembrane segment at 1981–2002 (AVTHLRGFLLLFATVRVWDLLR) threads the bilayer. Residues 2003 to 2019 (HHAQLQVINKTLSKAWD) are Cytoplasmic-facing. A helical transmembrane segment spans residues 2020–2044 (EVLGFILIIVVLLSSYAMTFNLLFG). The segment at 2043 to 2081 (FGWSISDYQSFFRSIVTVVGLLMGTSKHKEVIALYPILG) is channel pore-region. Residues 2045 to 2077 (WSISDYQSFFRSIVTVVGLLMGTSKHKEVIALY) lie on the Extracellular side of the membrane. A helical membrane pass occupies residues 2078–2097 (PILGSLLVLSSIILMGLVII). Residues 2098 to 2151 (NLFVSAILIAFGKERKACEKEATLTDMLLQKLSSLLGIRLHQNPSEEHADNTGY) lie on the Cytoplasmic side of the membrane.

Belongs to the polycystin family. In terms of assembly, heterotetramer with PKD2L1, composed of 3 subunit of PKD2L1 and 1 subunit of PKD1L3. In terms of processing, autoproteolytically processed at the GPS region of the GAIN-B domain; this cleavage modulates receptor activity. As to expression, expressed in a subset of taste receptor cells (type III taste cells) distinct from those involved in bitter, sweet and umami taste. Expressed in circumvallate and foliate taste buds, but not in surrounding non-gustatory lingual epithelium cells. Expressed in testis.

The protein resides in the cell membrane. It carries out the reaction Ca(2+)(in) = Ca(2+)(out). The catalysed reaction is Na(+)(in) = Na(+)(out). The enzyme catalyses K(+)(in) = K(+)(out). It catalyses the reaction Mg(2+)(in) = Mg(2+)(out). The non-selective cation channel is gated following an off-response property by acid: gated open after the removal of acid stimulus, but not during acid application. Non-selective cation channel activity is inhibited by capsaicin. Regulation of non-selective cation channel activity by external Ca(2+) is bimodal, first sensitizing and subsequently inactivating the current. The apo (closed) heterotetramer has an asymmetric selectivity filter (SF) guarded by Lys-2069 in absence of Ca(2+). However, Ca(2+)-entrance to the SF vestibule is accompanied by a swing motion of Lys-2069 on PKD1L3. Functionally, pore-forming subunit of a heterotetrameric, non-selective cation channel that is permeable to Ca(2+). Also shows permeability towards NA(1+), K(+) and Mg(2+). Heterotetrameric complex channel is activated by external low pH and Ca(2+), but opens only when the extracellular pH rises again and after the removal of acid stimulus. May act as a sour taste receptor in gustatory cells; however, its contribution to sour taste perception is unclear in vivo and may be indirect. In Mus musculus (Mouse), this protein is Polycystin-1-like protein 3.